The chain runs to 446 residues: Amino-acid acetyltransferase (446 aa).

Residues 299-438 enclose the N-acetyltransferase domain; sequence EQVRDAEIDD…QKLYNFQRKS (140 aa).

The protein belongs to the acetyltransferase family. ArgA subfamily.

The protein resides in the cytoplasm. It catalyses the reaction L-glutamate + acetyl-CoA = N-acetyl-L-glutamate + CoA + H(+). Its pathway is amino-acid biosynthesis; L-arginine biosynthesis; N(2)-acetyl-L-ornithine from L-glutamate: step 1/4. The protein is Amino-acid acetyltransferase of Aliivibrio fischeri (strain ATCC 700601 / ES114) (Vibrio fischeri).